Here is a 385-residue protein sequence, read N- to C-terminus: Cytochrome b (385 aa).

Topologically, residues 1–27 are mitochondrial matrix; it reads MAFRKSNVYLSLVNSYIIDSPQPSSIN. A ubiquinone is bound at residue Tyr-16. The helical transmembrane segment at 28–51 threads the bilayer; that stretch reads YWWNMGSLLGLCLVIQIVTGIFMA. Residues 52–74 are Mitochondrial intermembrane-facing; the sequence is MHYSSNIELAFSSVEHIMRDVHN. The chain crosses the membrane as a helical span at residues 75–102; the sequence is GYILRYLHANGASFFFMVMFMHMAKGLY. The heme b site is built by His-82 and His-96. Residues 103-110 lie on the Mitochondrial matrix side of the membrane; that stretch reads YGSYRSPR. A helical membrane pass occupies residues 111 to 135; that stretch reads VTLWNVGVIIFILTIATAFLGYCCV. The Mitochondrial intermembrane portion of the chain corresponds to 136–172; the sequence is YGQMSHWGATVITNLFSAIPFVGNDIVSWLWGGFSVS. A helical transmembrane segment spans residues 173–204; that stretch reads NPTIQRFFALHYLVPFIIAAMVIMHLMALHIH. Heme b-binding residues include His-183 and His-197. Residue His-202 participates in a ubiquinone binding. Over 205–223 the chain is Mitochondrial matrix; the sequence is GSSNPLGITGNLDRIPMHS. A helical membrane pass occupies residues 224 to 246; it reads YFIFKDLVTVFLFMLILALFVFY. Topologically, residues 247–287 are mitochondrial intermembrane; the sequence is SPNTLGHPDNYIPGNPLVTPASIVPEWYLLPFYAILRSIPD. Residues 288–308 traverse the membrane as a helical segment; sequence KLLGVITMFAAILVLLVLPFT. Residues 309 to 319 lie on the Mitochondrial matrix side of the membrane; the sequence is DRSVVRGNTFK. Residues 320–340 traverse the membrane as a helical segment; sequence VLSKFFFFIFVFNFVLLGQIG. Residues 341–347 lie on the Mitochondrial intermembrane side of the membrane; sequence ACHVEVP. The helical transmembrane segment at 348-364 threads the bilayer; the sequence is YVLMGQIATFIYFAYFL. Topologically, residues 365–385 are mitochondrial matrix; that stretch reads IIVPVISTIENVLFYIGRVNK.

It belongs to the cytochrome b family. As to quaternary structure, component of the ubiquinol-cytochrome c oxidoreductase (cytochrome b-c1 complex, complex III, CIII), a multisubunit enzyme composed of 10 subunits. The complex is composed of 3 respiratory subunits cytochrome b (COB), cytochrome c1 (CYT1) and Rieske protein (RIP1), 2 core protein subunits COR1 and QCR2, and 5 low-molecular weight protein subunits QCR6, QCR7, QCR8, QCR9 and QCR10. The complex exists as an obligatory dimer and forms supercomplexes (SCs) in the inner mitochondrial membrane with a monomer or a dimer of cytochrome c oxidase (complex IV, CIV), resulting in 2 different assemblies (supercomplexes III(2)IV and III(2)IV(2)). The cofactor is heme b.

The protein localises to the mitochondrion inner membrane. It catalyses the reaction a quinol + 2 Fe(III)-[cytochrome c](out) = a quinone + 2 Fe(II)-[cytochrome c](out) + 2 H(+)(out). In terms of biological role, component of the ubiquinol-cytochrome c oxidoreductase, a multisubunit transmembrane complex that is part of the mitochondrial electron transport chain which drives oxidative phosphorylation. The respiratory chain contains 3 multisubunit complexes succinate dehydrogenase (complex II, CII), ubiquinol-cytochrome c oxidoreductase (cytochrome b-c1 complex, complex III, CIII) and cytochrome c oxidase (complex IV, CIV), that cooperate to transfer electrons derived from NADH and succinate to molecular oxygen, creating an electrochemical gradient over the inner membrane that drives transmembrane transport and the ATP synthase. The cytochrome b-c1 complex catalyzes electron transfer from ubiquinol to cytochrome c, linking this redox reaction to translocation of protons across the mitochondrial inner membrane, with protons being carried across the membrane as hydrogens on the quinol. In the process called Q cycle, 2 protons are consumed from the matrix, 4 protons are released into the intermembrane space and 2 electrons are passed to cytochrome c. Cytochrome b is a catalytic core subunit containing 2 b-type hemes BL and BH topographically segregated in the quinone reduction (Qi) and quinol oxidation (Q0) sites on opposite sides of the membrane. The protein is Cytochrome b (COB) of Saccharomyces cerevisiae (strain ATCC 204508 / S288c) (Baker's yeast).